The primary structure comprises 325 residues: Tetraacyldisaccharide 4'-kinase (325 aa).

58–65 (TVGGSGKT) contacts ATP.

Belongs to the LpxK family.

The enzyme catalyses a lipid A disaccharide + ATP = a lipid IVA + ADP + H(+). It participates in glycolipid biosynthesis; lipid IV(A) biosynthesis; lipid IV(A) from (3R)-3-hydroxytetradecanoyl-[acyl-carrier-protein] and UDP-N-acetyl-alpha-D-glucosamine: step 6/6. Transfers the gamma-phosphate of ATP to the 4'-position of a tetraacyldisaccharide 1-phosphate intermediate (termed DS-1-P) to form tetraacyldisaccharide 1,4'-bis-phosphate (lipid IVA). This chain is Tetraacyldisaccharide 4'-kinase, found in Coxiella burnetii (strain CbuG_Q212) (Coxiella burnetii (strain Q212)).